A 272-amino-acid polypeptide reads, in one-letter code: Indole-3-glycerol phosphate synthase (272 aa).

The protein belongs to the TrpC family.

The enzyme catalyses 1-(2-carboxyphenylamino)-1-deoxy-D-ribulose 5-phosphate + H(+) = (1S,2R)-1-C-(indol-3-yl)glycerol 3-phosphate + CO2 + H2O. It functions in the pathway amino-acid biosynthesis; L-tryptophan biosynthesis; L-tryptophan from chorismate: step 4/5. The chain is Indole-3-glycerol phosphate synthase from Mycobacterium tuberculosis (strain ATCC 25177 / H37Ra).